Consider the following 126-residue polypeptide: S-adenosylmethionine decarboxylase proenzyme (126 aa).

Catalysis depends on Ser-63, which acts as the Schiff-base intermediate with substrate; via pyruvic acid. A Pyruvic acid (Ser); by autocatalysis modification is found at Ser-63. The Proton acceptor; for processing activity role is filled by His-68. Cys-83 functions as the Proton donor; for catalytic activity in the catalytic mechanism.

It belongs to the prokaryotic AdoMetDC family. Type 1 subfamily. As to quaternary structure, heterotetramer of two alpha and two beta chains arranged as a dimer of alpha/beta heterodimers. Pyruvate serves as cofactor. In terms of processing, is synthesized initially as an inactive proenzyme. Formation of the active enzyme involves a self-maturation process in which the active site pyruvoyl group is generated from an internal serine residue via an autocatalytic post-translational modification. Two non-identical subunits are generated from the proenzyme in this reaction, and the pyruvate is formed at the N-terminus of the alpha chain, which is derived from the carboxyl end of the proenzyme. The post-translation cleavage follows an unusual pathway, termed non-hydrolytic serinolysis, in which the side chain hydroxyl group of the serine supplies its oxygen atom to form the C-terminus of the beta chain, while the remainder of the serine residue undergoes an oxidative deamination to produce ammonia and the pyruvoyl group blocking the N-terminus of the alpha chain.

It carries out the reaction S-adenosyl-L-methionine + H(+) = S-adenosyl 3-(methylsulfanyl)propylamine + CO2. It participates in amine and polyamine biosynthesis; S-adenosylmethioninamine biosynthesis; S-adenosylmethioninamine from S-adenosyl-L-methionine: step 1/1. Functionally, catalyzes the decarboxylation of S-adenosylmethionine to S-adenosylmethioninamine (dcAdoMet), the propylamine donor required for the synthesis of the polyamines spermine and spermidine from the diamine putrescine. In Pelotomaculum thermopropionicum (strain DSM 13744 / JCM 10971 / SI), this protein is S-adenosylmethionine decarboxylase proenzyme.